The chain runs to 117 residues: Large ribosomal subunit protein bL19 (117 aa).

The protein belongs to the bacterial ribosomal protein bL19 family.

Its function is as follows. This protein is located at the 30S-50S ribosomal subunit interface and may play a role in the structure and function of the aminoacyl-tRNA binding site. This chain is Large ribosomal subunit protein bL19, found in Shewanella woodyi (strain ATCC 51908 / MS32).